A 343-amino-acid polypeptide reads, in one-letter code: 3-isopropylmalate dehydrogenase (343 aa).

The substrate site is built by Arg-94, Arg-104, Arg-128, and Asp-218. Residues Asp-218, Asp-242, and Asp-246 each contribute to the Mg(2+) site. 278 to 290 (GSAPDIAGQNKAN) lines the NAD(+) pocket.

This sequence belongs to the isocitrate and isopropylmalate dehydrogenases family. LeuB type 2 subfamily. As to quaternary structure, homodimer. The cofactor is Mg(2+). Mn(2+) serves as cofactor.

It is found in the cytoplasm. It catalyses the reaction (2R,3S)-3-isopropylmalate + NAD(+) = 4-methyl-2-oxopentanoate + CO2 + NADH. Its pathway is amino-acid biosynthesis; L-leucine biosynthesis; L-leucine from 3-methyl-2-oxobutanoate: step 3/4. Its function is as follows. Catalyzes the oxidation of 3-carboxy-2-hydroxy-4-methylpentanoate (3-isopropylmalate) to 3-carboxy-4-methyl-2-oxopentanoate. The product decarboxylates to 4-methyl-2 oxopentanoate. This chain is 3-isopropylmalate dehydrogenase, found in Bifidobacterium longum subsp. infantis (strain ATCC 15697 / DSM 20088 / JCM 1222 / NCTC 11817 / S12).